Here is a 129-residue protein sequence, read N- to C-terminus: uncharacterized protein (129 aa).

An N-terminal signal peptide occupies residues 1–20; that stretch reads MIYPLFRICILGAFLLGSYA.

This is an uncharacterized protein from Saccharomyces cerevisiae (strain ATCC 204508 / S288c) (Baker's yeast).